We begin with the raw amino-acid sequence, 348 residues long: [LysW]-L-2-aminoadipate 6-phosphate reductase (348 aa).

Position 14 to 17 (14 to 17 (SGYA)) interacts with NADP(+). Residue cysteine 151 is part of the active site. NADP(+) is bound at residue asparagine 315.

It belongs to the NAGSA dehydrogenase family. Type 1 subfamily. LysY sub-subfamily.

The protein localises to the cytoplasm. The catalysed reaction is [amino-group carrier protein]-C-terminal-N-(1-carboxy-5-oxopentan-1-yl)-L-glutamine + phosphate + NADP(+) = [amino-group carrier protein]-C-terminal-N-(1-carboxy-5-phosphooxy-5-oxopentan-1-yl)-L-glutamine + NADPH + H(+). It functions in the pathway amino-acid biosynthesis; L-lysine biosynthesis via AAA pathway; L-lysine from L-alpha-aminoadipate (Thermus route): step 3/5. In terms of biological role, catalyzes the NADPH-dependent reduction of [LysW]-aminoadipate 6-phosphate to yield [LysW]-aminoadipate 6-semialdehyde. The polypeptide is [LysW]-L-2-aminoadipate 6-phosphate reductase (Deinococcus radiodurans (strain ATCC 13939 / DSM 20539 / JCM 16871 / CCUG 27074 / LMG 4051 / NBRC 15346 / NCIMB 9279 / VKM B-1422 / R1)).